The primary structure comprises 309 residues: MKNKTVLTEFILLGLTDVPELQVAVFTFLFLAYLLSILGNLTILILTLLDSHLQTPMYFFLRNFSFLEISFTNIFIPRVLISITTGNKSISFAGCFTQYFFAMFLGATEFYLLAAMSYDRYVAICKPLHYTTIMSSRICIQLIFCSWLGGLMAIIPTITLMSQQDFCASNRLNHYFCDYEPLLELSCSDTSLIEKVVFLVASVTLVVTLVLVILSYAFIIKTILKLPSAQQRTKAFSTCSSHMIVISLSYGSCMFMYINPSAKEGDTFNKGVALLITSVAPLLNPFIYTLRNQQVKQPFKDMVKKLLNL.

Residues 1–23 (MKNKTVLTEFILLGLTDVPELQV) lie on the Extracellular side of the membrane. N3 carries N-linked (GlcNAc...) asparagine glycosylation. A helical transmembrane segment spans residues 24–47 (AVFTFLFLAYLLSILGNLTILILT). At 48–55 (LLDSHLQT) the chain is on the cytoplasmic side. Residues 56-77 (PMYFFLRNFSFLEISFTNIFIP) form a helical membrane-spanning segment. Topologically, residues 78–98 (RVLISITTGNKSISFAGCFTQ) are extracellular. Residue N87 is glycosylated (N-linked (GlcNAc...) asparagine). The cysteines at positions 95 and 187 are disulfide-linked. The chain crosses the membrane as a helical span at residues 99 to 118 (YFFAMFLGATEFYLLAAMSY). Residues 119–137 (DRYVAICKPLHYTTIMSSR) are Cytoplasmic-facing. Residues 138 to 156 (ICIQLIFCSWLGGLMAIIP) traverse the membrane as a helical segment. The Extracellular segment spans residues 157-193 (TITLMSQQDFCASNRLNHYFCDYEPLLELSCSDTSLI). Residues 194–217 (EKVVFLVASVTLVVTLVLVILSYA) form a helical membrane-spanning segment. At 218–234 (FIIKTILKLPSAQQRTK) the chain is on the cytoplasmic side. A helical membrane pass occupies residues 235 to 257 (AFSTCSSHMIVISLSYGSCMFMY). At 258-270 (INPSAKEGDTFNK) the chain is on the extracellular side. Residues 271-290 (GVALLITSVAPLLNPFIYTL) form a helical membrane-spanning segment. Topologically, residues 291–309 (RNQQVKQPFKDMVKKLLNL) are cytoplasmic.

It belongs to the G-protein coupled receptor 1 family.

The protein resides in the cell membrane. In terms of biological role, odorant receptor. The polypeptide is Olfactory receptor 2AP1 (OR2AP1) (Homo sapiens (Human)).